A 430-amino-acid chain; its full sequence is Mothers against decapentaplegic homolog 9 (430 aa).

Residues 16-140 (PAVKRLLGWK…YRRVETPVLP (125 aa)) form the MH1 domain. The Zn(2+) site is built by Cys68, Cys113, Cys125, and His130. The disordered stretch occupies residues 186 to 222 (CPAPPSSPGHVFPQSPCPTSYPHSPGSPSESDSPYQH). A compositionally biased stretch (polar residues) spans 202–221 (CPTSYPHSPGSPSESDSPYQ). An MH2 domain is found at 236-430 (WCSVAYYELN…SPHNPISSVS (195 aa)).

It belongs to the dwarfin/SMAD family. In terms of assembly, interaction with the co-SMAD SMAD4. Interacts with PEBP2-alpha subunit. Interacts with RANBP3L. Post-translationally, phosphorylated on serine by BMP (bone morphogenetic proteins) type 1 receptor kinase and activin type I receptor-like kinases (ALK-2, ALK-3 and ALK-6).

It localises to the cytoplasm. The protein resides in the nucleus. Its function is as follows. Transcriptional modulator activated by BMP (bone morphogenetic proteins) type 1 receptor kinase. SMAD9 is a receptor-regulated SMAD (R-SMAD). Has been shown to be activated by activin type I receptor-like kinases (ALK-2, ALK-3, ALK-6) which stimulate heteromerization between SMAD9 and SMAD4. May play a role in osteoblast differentiation and maturation. The chain is Mothers against decapentaplegic homolog 9 (Smad9) from Mus musculus (Mouse).